Reading from the N-terminus, the 204-residue chain is Tumor necrosis factor alpha-induced protein 8-like protein 3 (204 aa).

The segment covering 1–10 (MDSDSGEQSE) has biased composition (acidic residues). Residues 1–20 (MDSDSGEQSEGEPGTAAGPH) form a disordered region. The interval 21–204 (VFSSKNLALQ…INKLLDDKIL (184 aa)) is binding to phosphoinositides.

It belongs to the TNFAIP8 family. In terms of tissue distribution, widely expressed (at protein level).

It is found in the cytoplasm. It localises to the cell membrane. Its function is as follows. Acts as a lipid transfer protein. Preferentially captures and shuttles two lipid second messengers, i.e., phosphatidylinositol 4,5- bisphosphate and phosphatidylinositol 3,4,5-trisphosphate and increases their levels in the plasma membrane. Additionally, may also function as a lipid-presenting protein to enhance the activity of the PI3K-AKT and MEK-ERK pathways. May act as a regulator of tumorigenesis through its activation of phospholipid signaling. The polypeptide is Tumor necrosis factor alpha-induced protein 8-like protein 3 (Tnfaip8l3) (Mus musculus (Mouse)).